Consider the following 344-residue polypeptide: 4-hydroxy-3-methylbut-2-en-1-yl diphosphate synthase (flavodoxin) (344 aa).

[4Fe-4S] cluster is bound by residues C253, C256, C288, and E295.

This sequence belongs to the IspG family. [4Fe-4S] cluster is required as a cofactor.

The enzyme catalyses (2E)-4-hydroxy-3-methylbut-2-enyl diphosphate + oxidized [flavodoxin] + H2O + 2 H(+) = 2-C-methyl-D-erythritol 2,4-cyclic diphosphate + reduced [flavodoxin]. It functions in the pathway isoprenoid biosynthesis; isopentenyl diphosphate biosynthesis via DXP pathway; isopentenyl diphosphate from 1-deoxy-D-xylulose 5-phosphate: step 5/6. Functionally, converts 2C-methyl-D-erythritol 2,4-cyclodiphosphate (ME-2,4cPP) into 1-hydroxy-2-methyl-2-(E)-butenyl 4-diphosphate. The chain is 4-hydroxy-3-methylbut-2-en-1-yl diphosphate synthase (flavodoxin) from Thermotoga petrophila (strain ATCC BAA-488 / DSM 13995 / JCM 10881 / RKU-1).